The chain runs to 362 residues: Oxygen-dependent coproporphyrinogen-III oxidase (362 aa).

The disordered stretch occupies residues 12-31 (RQENDQSTPQLELPPTDSRD). S118 contributes to the substrate binding site. A divalent metal cation-binding residues include H122 and H132. Catalysis depends on H132, which acts as the Proton donor. 134 to 136 (NYR) is a binding site for substrate. A divalent metal cation-binding residues include H166 and H196. The segment at 286 to 321 (YVEFNLVWDRGTIFGLQTNGRTESILMSLPPLVRWE) is important for dimerization.

The protein belongs to the aerobic coproporphyrinogen-III oxidase family. In terms of assembly, homodimer. A divalent metal cation is required as a cofactor.

The protein localises to the cytoplasm. It carries out the reaction coproporphyrinogen III + O2 + 2 H(+) = protoporphyrinogen IX + 2 CO2 + 2 H2O. It functions in the pathway porphyrin-containing compound metabolism; protoporphyrin-IX biosynthesis; protoporphyrinogen-IX from coproporphyrinogen-III (O2 route): step 1/1. Functionally, involved in the heme and chlorophyll biosynthesis. Catalyzes the aerobic oxidative decarboxylation of propionate groups of rings A and B of coproporphyrinogen-III to yield the vinyl groups in protoporphyrinogen-IX. The chain is Oxygen-dependent coproporphyrinogen-III oxidase from Synechococcus sp. (strain CC9902).